We begin with the raw amino-acid sequence, 1420 residues long: DNA-directed RNA polymerase subunit beta' (1420 aa).

Positions 70, 72, 85, and 88 each coordinate Zn(2+). 3 residues coordinate Mg(2+): Asp464, Asp466, and Asp468. Residues Cys823, Cys897, Cys904, and Cys907 each coordinate Zn(2+).

Belongs to the RNA polymerase beta' chain family. In terms of assembly, the RNAP catalytic core consists of 2 alpha, 1 beta, 1 beta' and 1 omega subunit. When a sigma factor is associated with the core the holoenzyme is formed, which can initiate transcription. Mg(2+) is required as a cofactor. Requires Zn(2+) as cofactor.

The catalysed reaction is RNA(n) + a ribonucleoside 5'-triphosphate = RNA(n+1) + diphosphate. Functionally, DNA-dependent RNA polymerase catalyzes the transcription of DNA into RNA using the four ribonucleoside triphosphates as substrates. The chain is DNA-directed RNA polymerase subunit beta' from Polynucleobacter necessarius subsp. necessarius (strain STIR1).